The following is a 330-amino-acid chain: Intraflagellar transport protein 46 homolog (330 aa).

2 disordered regions span residues 1-21 (MDRP…ATPR) and 55-112 (SIKT…EGVY). Positions 7-16 (ETVDIPDSED) are enriched in acidic residues. Residues 68 to 79 (SSSEKLCDRGSS) are compositionally biased toward basic and acidic residues. Residues 80-101 (DDDDDDDNDDDEDEDDDDDDEN) are compositionally biased toward acidic residues.

It belongs to the IFT46 family.

The protein localises to the cytoplasm. It is found in the cytoskeleton. Its subcellular location is the cilium basal body. The protein resides in the cell projection. It localises to the cilium. Forms part of a complex involved in intraflagellar transport (IFT), the bi-directional movement of particles required for the assembly, maintenance and functioning of primary cilia. The polypeptide is Intraflagellar transport protein 46 homolog (Schistosoma japonicum (Blood fluke)).